The following is an 816-amino-acid chain: H(+)/Cl(-) exchange transporter 5 (816 aa).

Over 1–124 (MAMWQGAMDN…WALIHSVSDA (124 aa)) the chain is Cytoplasmic. The next 2 helical transmembrane spans lie at 125 to 162 (FSGWLLMLLIGLLSGSLAGLIDISAHWMTDLKEGICTG) and 208 to 231 (VNYFMYVLWALLFAFLAVSLVKAF). The Selectivity filter part_1 signature appears at 237–241 (GSGIP). Chloride is bound at residue Ser-238. The helical intramembrane region spans 240–247 (IPEIKTIL). 2 consecutive transmembrane segments (helical) span residues 256 to 275 (LGKWTLVIKTITLVLAVSSG) and 281 to 300 (EGPLVHVACCCGNILCHCFN). The Selectivity filter part_2 signature appears at 279 to 283 (GKEGP). Intramembrane regions (helical) lie at residues 312-324 (VLSAAAAAGVSVA) and 328-336 (PIGGVLFSL). 5 consecutive transmembrane segments (helical) span residues 348–366 (LWRSFFAALVAAFTLRSIN), 389–414 (LVPFIVLGIFGGLWGALFIRTNIAWC), 422–442 (LGKYPVVEVLIVTAITAILAF), 498–518 (MWQLALTLILKIVITIFTFGM), and 523–542 (GLFIPSMAVGAIAGRLLGVG). Residues 523–527 (GLFIP) carry the Selectivity filter part_3 motif. Phe-525 serves as a coordination point for chloride. The helical intramembrane region spans 570-584 (GLYAMVGAAACLGGV). The segment at residues 585–587 (TRM) is an intramembrane region (note=Loop between two helices). Residues 588 to 599 (TVSLVVIMFELT) constitute an intramembrane region (helical). Positions 600 to 604 (GGLEY) form an intramembrane region, note=Loop between two helices. The chain crosses the membrane as a helical span at residues 605–622 (IVPLMAAAMTSKWVADAL). At 623 to 816 (GREGIYDAHI…NQDPESILFN (194 aa)) the chain is on the cytoplasmic side. Residue Tyr-628 coordinates chloride. 2 consecutive CBS domains span residues 656–720 (MKPR…ARKK) and 752–811 (ILDL…QDPE). ATP contacts are provided by residues Thr-666, 687–689 (YSG), and 794–797 (TKKD).

It belongs to the chloride channel (TC 2.A.49) family. ClC-5/CLCN5 subfamily. As to quaternary structure, interacts with NEDD4 and NEDD4L. Post-translationally, ubiquitinated by NEDD4L in the presence of albumin; which promotes endocytosis and proteasomal degradation. As to expression, kidney specific.

Its subcellular location is the golgi apparatus membrane. It is found in the endosome membrane. The protein localises to the cell membrane. It catalyses the reaction 2 chloride(in) + H(+)(out) = 2 chloride(out) + H(+)(in). In terms of biological role, proton-coupled chloride transporter. Functions as antiport system and exchanges chloride ions against protons. Important for normal acidification of the endosome lumen. May play an important role in renal tubular function. The CLC channel family contains both chloride channels and proton-coupled anion transporters that exchange chloride or another anion for protons. The absence of conserved gating glutamate residues is typical for family members that function as channels. In Rattus norvegicus (Rat), this protein is H(+)/Cl(-) exchange transporter 5 (Clcn5).